A 267-amino-acid chain; its full sequence is Phosphate import ATP-binding protein PstB (267 aa).

In terms of domain architecture, ABC transporter spans 21–262; that stretch reads VAARNLDFYY…PSKQQTEDYI (242 aa). Residue 53 to 60 coordinates ATP; sequence GPSGCGKS.

This sequence belongs to the ABC transporter superfamily. Phosphate importer (TC 3.A.1.7) family. The complex is composed of two ATP-binding proteins (PstB), two transmembrane proteins (PstC and PstA) and a solute-binding protein (PstS).

The protein localises to the cell inner membrane. The enzyme catalyses phosphate(out) + ATP + H2O = ADP + 2 phosphate(in) + H(+). Functionally, part of the ABC transporter complex PstSACB involved in phosphate import. Responsible for energy coupling to the transport system. The sequence is that of Phosphate import ATP-binding protein PstB from Xanthomonas axonopodis pv. citri (strain 306).